The chain runs to 444 residues: ATP-dependent protease ATPase subunit HslU (444 aa).

ATP-binding positions include isoleucine 18 and 60 to 65 (GVGKTE). A disordered region spans residues 141-161 (DAWGNNEEGNNDSGTRQSFRK). Over residues 147 to 157 (EEGNNDSGTRQ) the composition is skewed to polar residues. ATP is bound by residues aspartate 257, glutamate 322, and arginine 394.

The protein belongs to the ClpX chaperone family. HslU subfamily. As to quaternary structure, a double ring-shaped homohexamer of HslV is capped on each side by a ring-shaped HslU homohexamer. The assembly of the HslU/HslV complex is dependent on binding of ATP.

The protein resides in the cytoplasm. In terms of biological role, ATPase subunit of a proteasome-like degradation complex; this subunit has chaperone activity. The binding of ATP and its subsequent hydrolysis by HslU are essential for unfolding of protein substrates subsequently hydrolyzed by HslV. HslU recognizes the N-terminal part of its protein substrates and unfolds these before they are guided to HslV for hydrolysis. The chain is ATP-dependent protease ATPase subunit HslU from Aliivibrio fischeri (strain ATCC 700601 / ES114) (Vibrio fischeri).